We begin with the raw amino-acid sequence, 641 residues long: 1-deoxy-D-xylulose-5-phosphate synthase (641 aa).

Thiamine diphosphate is bound by residues histidine 79 and 120-122 (GHS). Aspartate 151 is a Mg(2+) binding site. Thiamine diphosphate-binding positions include 152–153 (GS), asparagine 180, tyrosine 291, and glutamate 375. A Mg(2+)-binding site is contributed by asparagine 180.

This sequence belongs to the transketolase family. DXPS subfamily. Homodimer. The cofactor is Mg(2+). Thiamine diphosphate is required as a cofactor.

The catalysed reaction is D-glyceraldehyde 3-phosphate + pyruvate + H(+) = 1-deoxy-D-xylulose 5-phosphate + CO2. Its pathway is metabolic intermediate biosynthesis; 1-deoxy-D-xylulose 5-phosphate biosynthesis; 1-deoxy-D-xylulose 5-phosphate from D-glyceraldehyde 3-phosphate and pyruvate: step 1/1. Functionally, catalyzes the acyloin condensation reaction between C atoms 2 and 3 of pyruvate and glyceraldehyde 3-phosphate to yield 1-deoxy-D-xylulose-5-phosphate (DXP). This chain is 1-deoxy-D-xylulose-5-phosphate synthase, found in Nitratidesulfovibrio vulgaris (strain ATCC 29579 / DSM 644 / CCUG 34227 / NCIMB 8303 / VKM B-1760 / Hildenborough) (Desulfovibrio vulgaris).